We begin with the raw amino-acid sequence, 86 residues long: U2-sicaritoxin-Li1b (86 aa).

Residues 1-20 form the signal peptide; the sequence is MKIELFLVVIFALAIHMATA. Residues 21–33 constitute a propeptide that is removed on maturation; that stretch reads EEVIESDIEPAER. 4 disulfide bridges follow: Cys-35-Cys-53, Cys-42-Cys-62, Cys-52-Cys-71, and Cys-64-Cys-69. Lys-85 bears the Lysine amide mark.

The protein belongs to the neurotoxin 39 family. Expressed by the venom gland.

It is found in the secreted. Toxin active against S.frugiperda larvae. May act on sodium channels (Nav). This Loxosceles intermedia (Brown spider) protein is U2-sicaritoxin-Li1b.